Reading from the N-terminus, the 1013-residue chain is AP-2 complex subunit alpha-2 (1013 aa).

HEAT repeat units follow at residues 254–289 (AMRA…VVKN), 354–391 (DIIK…VSNA), 393–430 (DIVE…DLSW), and 521–565 (TVST…CIDV). The disordered stretch occupies residues 652 to 676 (STDPESVARSLSHPNGTLSNIDPQT). A compositionally biased stretch (polar residues) spans 663-675 (SHPNGTLSNIDPQ). A GAE domain is found at 742-841 (ALCLKDSGVL…LDFSYKFGTN (100 aa)). Residues 760-1013 (GIKAEWRGHH…DPGAMLAGLL (254 aa)) are required for AP180 binding.

The protein belongs to the adaptor complexes large subunit family. Adaptor protein complex 2 (AP-2) is a heterotetramer composed of two large adaptins (alpha-type and beta-type subunits), a medium adaptin (mu-type subunit) and a small adaptin (sigma-type subunit). Interacts with AP180.

It is found in the membrane. It localises to the coated pit. Subunit of the adaptor protein complex 2 (AP-2). Adaptor protein complexes function in protein transport via transport vesicles in different membrane traffic pathways. Adaptor protein complexes are vesicle coat components and appear to be involved in cargo selection and vesicle formation. AP-2 is involved in clathrin-dependent endocytosis in which cargo proteins are incorporated into vesicles surrounded by clathrin (clathrin-coated vesicles, CCVs) which are destined for fusion with the early endosome. The complex binds polyphosphoinositides. This Arabidopsis thaliana (Mouse-ear cress) protein is AP-2 complex subunit alpha-2 (ALPHAC-AD).